The sequence spans 338 residues: Glycerol-3-phosphate dehydrogenase [NAD(P)+] (338 aa).

Positions 11, 12, 32, 33, and 106 each coordinate NADPH. Sn-glycerol 3-phosphate contacts are provided by Lys-106, Gly-137, and Ser-139. Ala-141 is an NADPH binding site. Residues Lys-192, Asp-245, Ser-255, Arg-256, and Asn-257 each contribute to the sn-glycerol 3-phosphate site. Lys-192 (proton acceptor) is an active-site residue. Arg-256 serves as a coordination point for NADPH. NADPH-binding residues include Val-280 and Glu-282.

This sequence belongs to the NAD-dependent glycerol-3-phosphate dehydrogenase family.

It localises to the cytoplasm. The enzyme catalyses sn-glycerol 3-phosphate + NAD(+) = dihydroxyacetone phosphate + NADH + H(+). It carries out the reaction sn-glycerol 3-phosphate + NADP(+) = dihydroxyacetone phosphate + NADPH + H(+). Its pathway is membrane lipid metabolism; glycerophospholipid metabolism. Functionally, catalyzes the reduction of the glycolytic intermediate dihydroxyacetone phosphate (DHAP) to sn-glycerol 3-phosphate (G3P), the key precursor for phospholipid synthesis. This is Glycerol-3-phosphate dehydrogenase [NAD(P)+] from Lysinibacillus sphaericus (strain C3-41).